We begin with the raw amino-acid sequence, 186 residues long: Serine hydrolase RBBP9 (186 aa).

Residues 63-67 are involved in binding to RB1; sequence LHCDE. Catalysis depends on charge relay system residues serine 75, aspartate 138, and histidine 165.

The protein belongs to the RBBP9 family. Interacts with RB1; the interaction disrupts RB1 binding to E2F1. Interacts with RBL1 and RBL2. As to expression, expressed at higher levels in tumor tissues such as carcinoma.

The enzyme catalyses valacyclovir + H2O = acyclovir + L-valine + H(+). Inhibited by the natural product emetine produced by the ipecac root. Its function is as follows. Serine hydrolase. Catalyzes the hydrolytic activation of amino acid ester of the antiviral prodrug valacyclovir to its corresponding active drug, acyclovir. May negatively regulate basal or autocrine TGF-beta signaling by suppressing SMAD2-SMAD3 phosphorylation. May play a role in the transformation process due to its capacity to confer resistance to the growth-inhibitory effects of TGF-beta through interaction with RB1 and the subsequent displacement of E2F1. The sequence is that of Serine hydrolase RBBP9 from Homo sapiens (Human).